We begin with the raw amino-acid sequence, 377 residues long: Geranylgeranyl transferase type-1 subunit beta (377 aa).

4 PFTB repeats span residues 144–186, 193–234, 245–284, and 291–333; these read KEAC…YMLN, MKKA…CLMG, LNRIKRWCIMRQQNGYHGRPNKPVDTCYSFWVGATLKLLK, and FEKN…SLME. Geranylgeranyl diphosphate contacts are provided by residues 219–221 and 263–266; these read HGG and RPNK. Residues Asp-269 and Cys-271 each coordinate Zn(2+). 272–275 contributes to the geranylgeranyl diphosphate binding site; that stretch reads YSFW. Residue His-321 participates in Zn(2+) binding.

Belongs to the protein prenyltransferase subunit beta family. In terms of assembly, heterodimer of FNTA and PGGT1B. PGGT1B mediates interaction with substrate peptides. It depends on Zn(2+) as a cofactor. Requires Mg(2+) as cofactor.

It catalyses the reaction geranylgeranyl diphosphate + L-cysteinyl-[protein] = S-geranylgeranyl-L-cysteinyl-[protein] + diphosphate. In terms of biological role, catalyzes the transfer of a geranyl-geranyl moiety from geranyl-geranyl pyrophosphate to a cysteine at the fourth position from the C-terminus of proteins having the C-terminal sequence Cys-aliphatic-aliphatic-X. Known substrates include RAC1, RAC2, RAP1A and RAP1B. This is Geranylgeranyl transferase type-1 subunit beta (PGGT1B) from Homo sapiens (Human).